The chain runs to 330 residues: T-cell surface glycoprotein CD1b4 (330 aa).

Residues 1 to 15 (MLLLALAFFFPAGDT) form the signal peptide. Topologically, residues 16-299 (QNVLPGKISF…LYWGHSISIG (284 aa)) are extracellular. N-linked (GlcNAc...) asparagine glycosylation is found at Asn35, Asn72, and Asn143. Intrachain disulfides connect Cys117/Cys181 and Cys221/Cys276. In terms of domain architecture, Ig-like spans 182-292 (PRYLMSVIEA…LEGQDIILYW (111 aa)). The helical transmembrane segment at 300–320 (WIILAVLVPCLIVLVLFILWF) threads the bilayer. Topologically, residues 321–330 (YRRWSYEDIF) are cytoplasmic. The Internalization signal signature appears at 326 to 329 (YEDI).

As to quaternary structure, heterodimer with B2M (beta-2-microglobulin). Interacts with saposin C.

It is found in the cell membrane. Its subcellular location is the endosome membrane. It localises to the lysosome membrane. Functionally, antigen-presenting protein that binds self and non-self lipid and glycolipid antigens and presents them to T-cell receptors on natural killer T-cells. In Cavia porcellus (Guinea pig), this protein is T-cell surface glycoprotein CD1b4 (CD1B4).